The primary structure comprises 345 residues: MTDKTSLSYKDAGVDIDAGNALVGRIKGVVKKTRRPEVMGGLGGFGALCALPQKYREPVLVSGTDGVGTKLRLAMDLKRHDTIGIDLVAMCVNDLVVQGAEPLFFLDYYATGKLDVNTASAVISGIAEGCLQSGCSLVGGETAEMPGMYHGEDYDVAGFCVGVVEKSEIIDGSKVSDGDVLIALGSSGPHSNGYSLVRKILEVSGCDPQTTELDGKPLADHLLAPTRIYVKSVLELIEKVDVHAIAHLTGGGFWENIPRVLPDNTQAVIDESSWQWPEVFNWLQTAGNVERHEMYRTFNCGVGMIIALPAPEVDKALALLNANGENAWKIGIIKTSDSEQRVVIE.

It belongs to the AIR synthase family.

Its subcellular location is the cytoplasm. The enzyme catalyses 2-formamido-N(1)-(5-O-phospho-beta-D-ribosyl)acetamidine + ATP = 5-amino-1-(5-phospho-beta-D-ribosyl)imidazole + ADP + phosphate + H(+). The protein operates within purine metabolism; IMP biosynthesis via de novo pathway; 5-amino-1-(5-phospho-D-ribosyl)imidazole from N(2)-formyl-N(1)-(5-phospho-D-ribosyl)glycinamide: step 2/2. In Escherichia coli O45:K1 (strain S88 / ExPEC), this protein is Phosphoribosylformylglycinamidine cyclo-ligase.